Here is a 161-residue protein sequence, read N- to C-terminus: Lipoprotein signal peptidase (161 aa).

2 helical membrane-spanning segments follow: residues 64–84 (YRVPFFIITTSVAVVFLAWFY) and 92–114 (VLGRCAVSLVLGGAIGNLIDRVR). Catalysis depends on residues Asp-120 and Asp-138. The helical transmembrane segment at 131 to 151 (WPAFNVADSAICVGVGMLLLA) threads the bilayer.

It belongs to the peptidase A8 family.

Its subcellular location is the cell inner membrane. It catalyses the reaction Release of signal peptides from bacterial membrane prolipoproteins. Hydrolyzes -Xaa-Yaa-Zaa-|-(S,diacylglyceryl)Cys-, in which Xaa is hydrophobic (preferably Leu), and Yaa (Ala or Ser) and Zaa (Gly or Ala) have small, neutral side chains.. The protein operates within protein modification; lipoprotein biosynthesis (signal peptide cleavage). Functionally, this protein specifically catalyzes the removal of signal peptides from prolipoproteins. The polypeptide is Lipoprotein signal peptidase (Syntrophotalea carbinolica (strain DSM 2380 / NBRC 103641 / GraBd1) (Pelobacter carbinolicus)).